The chain runs to 564 residues: Sulfite reductase [NADPH] hemoprotein beta-component 1 (564 aa).

[4Fe-4S] cluster is bound by residues cysteine 426, cysteine 432, cysteine 471, and cysteine 475. Cysteine 475 provides a ligand contact to siroheme.

This sequence belongs to the nitrite and sulfite reductase 4Fe-4S domain family. As to quaternary structure, alpha(8)-beta(8). The alpha component is a flavoprotein, the beta component is a hemoprotein. The cofactor is siroheme. [4Fe-4S] cluster is required as a cofactor.

It catalyses the reaction hydrogen sulfide + 3 NADP(+) + 3 H2O = sulfite + 3 NADPH + 4 H(+). Its pathway is sulfur metabolism; hydrogen sulfide biosynthesis; hydrogen sulfide from sulfite (NADPH route): step 1/1. In terms of biological role, component of the sulfite reductase complex that catalyzes the 6-electron reduction of sulfite to sulfide. This is one of several activities required for the biosynthesis of L-cysteine from sulfate. In Pectobacterium carotovorum subsp. carotovorum (strain PC1), this protein is Sulfite reductase [NADPH] hemoprotein beta-component 1.